Here is a 484-residue protein sequence, read N- to C-terminus: FAD-dependent monooxygenase aurC (484 aa).

The N-terminal stretch at 1–21 (MGAYSFRVIIVGGSITGMTLA) is a signal peptide. FAD contacts are provided by E35, G49, and R108. Y216 is an active-site residue. Residues D308 and G321 each coordinate FAD. A helical transmembrane segment spans residues 451–471 (FAVASLIVLIVVLARALDSPA).

This sequence belongs to the paxM FAD-dependent monooxygenase family. FAD serves as cofactor.

It localises to the membrane. Its pathway is polyketide biosynthesis. In terms of biological role, FAD-dependent monooxygenase; part of the gene cluster that mediates the biosynthesis of aurovertins, fungal polyketides that exhibit potent inhibition of adenosine triphosphate synthase. Tha biosynthesis starts with the HR-PKS aurA that selects propionate as the starter unit; synthesizes a hexa-ene chain through the repeated functions of the KR and DH domains in the first six iterations; selectively introduces three alpha-methyl substitutions at C4, C6, and C16 using the S-adensylmethionine-dependent cMET; and shuts off KR and DH in the last three iterations to afford a 1,3,5-triketo portion that can undergo intramolecular cyclization to yield the alpha-pyrone intermediate. AurE may act as a cyclase and enhances the rate of pyrone formation and product release of aurA. The methyltransferase aurB then methylates the C17 hydroxyl group. C17 methylation is required to initiate epoxidation by the downstream monooxygenase aurC. The monooxygenase aurC and the epoxide hydrolase aurD can iteratively transform the terminal triene portion of the methylated precursor into the dioxabicyclo[3.2.1]octane scaffold of aurovertin E. Epoxidation modifications of the precursor occur in two separate steps; bis-epoxidation of the two terminal olefins takes place first, followed by another epoxidation that occurs at C7-C8 after tetrahydrofuran formation. The O-acyltransferase aurG converts aurovertin E to aurovertin A. This is FAD-dependent monooxygenase aurC from Calcarisporium arbuscula (Dendryphion arbuscula).